The following is a 198-amino-acid chain: Putative mycofactocin biosynthesis transcriptional regulator MftR (198 aa).

The 61-residue stretch at 12 to 72 (STTPHHISDV…GDFSTHLAQL (61 aa)) folds into the HTH tetR-type domain. Positions 35-54 (SVDDIARAAGIARRTLFRYY) form a DNA-binding region, H-T-H motif.

Functionally, may regulate a gene cluster involved in mycofactocin expression. Mycofactocin is a conserved polypeptide that might serve as an electron carrier. The sequence is that of Putative mycofactocin biosynthesis transcriptional regulator MftR (mftR) from Mycobacterium tuberculosis (strain ATCC 25618 / H37Rv).